The sequence spans 62 residues: Kurtoxin-like I (62 aa).

The region spanning 2–62 is the LCN-type CS-alpha/beta domain; the sequence is IDGYPVDNWN…ARIKRGGRCN (61 aa). Disulfide bonds link Cys-12–Cys-61, Cys-16–Cys-37, Cys-23–Cys-44, and Cys-27–Cys-46.

As to expression, expressed by the venom gland.

It is found in the secreted. Functionally, this neurotoxin acts on sodium and calcium channels. Potently inhibits native voltage-gated T-type calcium channel activity in mouse male germ cells and weakly blocks Cav3.3/CACNA1I channels expressed in Xenopus oocytes. In addition, significantly slows the inactivation of activated recombinant sodium channels (Nav1.5/SCN5A). The sequence is that of Kurtoxin-like I from Parabuthus granulatus (Granulated thick-tailed scorpion).